We begin with the raw amino-acid sequence, 752 residues long: Ribosomal protein S6 kinase 2 alpha (752 aa).

Positions F80–Y339 constitute a Protein kinase 1 domain. ATP is bound by residues L86–V94 and K112. D205 acts as the Proton acceptor in catalysis. At S239 the chain carries Phosphoserine. Residues S340 to K409 enclose the AGC-kinase C-terminal domain. Phosphothreonine is present on T377. Position 381 is a phosphoserine (S381). The residue at position 398 (S398) is a Phosphoserine; by autocatalysis. The Protein kinase 2 domain occupies Y435 to I692. Residues I441–C449 and K464 contribute to the ATP site. D552 (proton acceptor) is an active-site residue. Residue T590 is modified to Phosphothreonine. S749 is modified (phosphoserine).

This sequence belongs to the protein kinase superfamily. AGC Ser/Thr protein kinase family. S6 kinase subfamily. The cofactor is Mg(2+). Post-translationally, autophosphorylated on Ser-398, as part of the activation process. In terms of tissue distribution, small and large intestine, spleen, stomach, and bursa, and to a lesser extent lung and kidney.

It catalyses the reaction L-seryl-[protein] + ATP = O-phospho-L-seryl-[protein] + ADP + H(+). It carries out the reaction L-threonyl-[protein] + ATP = O-phospho-L-threonyl-[protein] + ADP + H(+). With respect to regulation, activated by multiple phosphorylations on threonine and serine residues. Its function is as follows. Serine/threonine kinase that may play a role in mediating the growth-factor and stress induced activation of transcription. This is Ribosomal protein S6 kinase 2 alpha (RPS6KA) from Gallus gallus (Chicken).